Consider the following 718-residue polypeptide: Glycine--tRNA ligase beta subunit (718 aa).

The protein belongs to the class-II aminoacyl-tRNA synthetase family. In terms of assembly, tetramer of two alpha and two beta subunits.

The protein resides in the cytoplasm. The enzyme catalyses tRNA(Gly) + glycine + ATP = glycyl-tRNA(Gly) + AMP + diphosphate. The polypeptide is Glycine--tRNA ligase beta subunit (Mesorhizobium japonicum (strain LMG 29417 / CECT 9101 / MAFF 303099) (Mesorhizobium loti (strain MAFF 303099))).